A 145-amino-acid polypeptide reads, in one-letter code: Large ribosomal subunit protein uL16 (145 aa).

The protein belongs to the universal ribosomal protein uL16 family. As to quaternary structure, part of the 50S ribosomal subunit.

Functionally, binds 23S rRNA and is also seen to make contacts with the A and possibly P site tRNAs. The chain is Large ribosomal subunit protein uL16 from Exiguobacterium sibiricum (strain DSM 17290 / CCUG 55495 / CIP 109462 / JCM 13490 / 255-15).